A 353-amino-acid chain; its full sequence is MTIALGKFTKDENDLFDIMDDWLRRDRFVFVGWSGLLLFPCAYFALGGWFTGTTFVTSWYTHGLASSYLEGCNFLTAAVSTPANSLAHSLLLLWGPEAQGDFTRWCQLGGLWTFVALHGAFALIGFMLRQFELARSVQLRPYNAIAFSAPIAVFVSVFLIYPLGQSGWFFAPSFGVAAIFRFILFFQGFHNWTLNPFHMMGVAGVLGAALLCAIHGATVENTLFEDGDGANTFRAFNPTQAEETYSMVTANRFWSQIFGVAFSNKRWLHFFMLFVPVTGLWMSALGVVGLALNLRAYDFVSQEIRAAEDPEFETFYTKNILLNEGIRAWMAAQDQPHENLIFPEEVLPRGNAL.

N-acetylthreonine is present on Thr2. A Phosphothreonine modification is found at Thr2. The helical transmembrane segment at 41–61 (CAYFALGGWFTGTTFVTSWYT) threads the bilayer. His118 contributes to the chlorophyll a binding site. Residues 125–141 (GFMLRQFELARSVQLRP) form a helical membrane-spanning segment. Residues Gln130 and Asn143 each coordinate pheophytin a. Residues 153–166 (VFVSVFLIYPLGQS) traverse the membrane as a helical segment. His198 serves as a coordination point for chlorophyll a. The chain crosses the membrane as a helical span at residues 208–228 (AALLCAIHGATVENTLFEDGD). Residues His215 and Phe262 each contribute to the a plastoquinone site. Residue His215 participates in Fe cation binding. His269 is a binding site for Fe cation. The helical transmembrane segment at 279–295 (GLWMSALGVVGLALNLR) threads the bilayer.

This sequence belongs to the reaction center PufL/M/PsbA/D family. As to quaternary structure, PSII is composed of 1 copy each of membrane proteins PsbA, PsbB, PsbC, PsbD, PsbE, PsbF, PsbH, PsbI, PsbJ, PsbK, PsbL, PsbM, PsbT, PsbX, PsbY, PsbZ, Psb30/Ycf12, at least 3 peripheral proteins of the oxygen-evolving complex and a large number of cofactors. It forms dimeric complexes. The D1/D2 heterodimer binds P680, chlorophylls that are the primary electron donor of PSII, and subsequent electron acceptors. It shares a non-heme iron and each subunit binds pheophytin, quinone, additional chlorophylls, carotenoids and lipids. There is also a Cl(-1) ion associated with D1 and D2, which is required for oxygen evolution. The PSII complex binds additional chlorophylls, carotenoids and specific lipids. is required as a cofactor.

The protein resides in the plastid. It is found in the chloroplast thylakoid membrane. It catalyses the reaction 2 a plastoquinone + 4 hnu + 2 H2O = 2 a plastoquinol + O2. Functionally, photosystem II (PSII) is a light-driven water:plastoquinone oxidoreductase that uses light energy to abstract electrons from H(2)O, generating O(2) and a proton gradient subsequently used for ATP formation. It consists of a core antenna complex that captures photons, and an electron transfer chain that converts photonic excitation into a charge separation. The D1/D2 (PsbA/PsbD) reaction center heterodimer binds P680, the primary electron donor of PSII as well as several subsequent electron acceptors. D2 is needed for assembly of a stable PSII complex. This chain is Photosystem II D2 protein, found in Morus indica (Mulberry).